Reading from the N-terminus, the 594-residue chain is Interactor of HORMAD1 protein 1 (594 aa).

3 coiled-coil regions span residues 109–135 (VGKS…SETL), 165–189 (QSIL…NDLV), and 219–245 (EMKS…CEQL). Residues 434-443 (VEMRGKDKKQ) show a composition bias toward basic and acidic residues. Residues 434–454 (VEMRGKDKKQQPRKAHRAHRG) form a disordered region. A compositionally biased stretch (basic residues) spans 444–454 (QPRKAHRAHRG). 2 positions are modified to phosphoserine: Ser-588 and Ser-589.

In terms of assembly, part of the MCD recombinosome complex, at least composed of IHO1, REC114 and MEI4. Interacts with REC114. Interacts with MEI4. Interacts with HORMAD1. Interacts with ANKRD31.

The protein localises to the chromosome. Required for DNA double-strand breaks (DSBs) formation in unsynapsed regions during meiotic recombination. Probably acts by forming a complex with MEI4 and REC114, which activates DSBs formation in unsynapsed regions, an essential step to ensure completion of synapsis. Not required for HORMAD1 functions in pairing-independent synaptonemal complex formation, ATR recruitment to unsynapsed axes, meiotic silencing of unsynapsed chromatin (MSUC) or meiotic surveillance. The protein is Interactor of HORMAD1 protein 1 of Homo sapiens (Human).